We begin with the raw amino-acid sequence, 556 residues long: Capsid vertex component 2 (556 aa).

The interaction with major capsid protein/MCP stretch occupies residues 1-54 (MWPVGSSYTRACSVQRWPKRCVYWAPSPQNVLEINPHRFQESRRSAALYRKHVV). The tract at residues 104 to 136 (QPASSNQGGARPQTDPHVPQPAPAIPSAPPKEN) is disordered. Pro residues predominate over residues 121–132 (VPQPAPAIPSAP).

It belongs to the herpesviridae CVC2 protein family. In terms of assembly, heterodimerizes with CVC1. Interacts with major capsid protein/MCP and triplex capsid protein 1/TRX1 at the pentamer vertices. Interacts with the large tegument protein/LTP.

It localises to the virion. The protein localises to the host nucleus. Its function is as follows. Capsid vertex-specific component that plays a role during viral DNA encapsidation, assuring correct genome cleavage and presumably stabilizing capsids that contain full-length viral genomes. Participates in the interaction between the capsid and the tegument through interaction with the large tegument protein/LTP. This chain is Capsid vertex component 2, found in Connochaetes taurinus (Blue wildebeest).